We begin with the raw amino-acid sequence, 251 residues long: Aquaporin (251 aa).

Topologically, residues 1–11 (MAGETLRKIQS) are cytoplasmic. Residues 12 to 32 (LLGEMVASFIFGFAVYSAILG) traverse the membrane as a helical segment. The Extracellular segment spans residues 33–42 (STIAQQPAAK). Residues 43 to 63 (VIIGLTVGFSAIGIIYSFSDV) traverse the membrane as a helical segment. Residues 64–86 (TIAHFNPAITLAAILTGKMGILC) are Cytoplasmic-facing. The NPA signature appears at 69–71 (NPA). A helical membrane pass occupies residues 87–107 (GLGYMLAQCVGFILAVCALLV). Over 108-133 (CSPVGYKETLNVIRPAPAPFGADNLN) the chain is Extracellular. The helical transmembrane segment at 134 to 154 (VFFTEFFLTAILVHIAFAVAV) threads the bilayer. Topologically, residues 155-179 (NPYRPKVDTDGKFVDPDEKEPVDRR) are cytoplasmic. A helical membrane pass occupies residues 180–200 (ITAPLCIGLTLGFLAFMGLVT). The Extracellular portion of the chain corresponds to 201 to 224 (SGGAFNPGLTLAPVIMSNTWQHFW). The short motif at 206 to 208 (NPG) is the NPG element. Residues 225 to 245 (LYLGAQYLGGLVGGLLQVFVL) traverse the membrane as a helical segment. The Cytoplasmic portion of the chain corresponds to 246–251 (YKLSSN).

Belongs to the MIP/aquaporin (TC 1.A.8) family.

The protein localises to the cell membrane. Water channel required to facilitate the transport of water across membranes. Involved in osmotolerance. The chain is Aquaporin (AQP) from Encephalitozoon hellem (Microsporidian parasite).